The primary structure comprises 280 residues: Capsid fiber protein (280 aa).

This sequence belongs to the phi29likevirus major capsid fiber protein family. Homotrimer. Forms a super helix coiled coil in the homotrimer.

The protein localises to the virion. Its function is as follows. Protein that forms the 55 capsid fibers. These fibers are not always present and may have been lost in some lab strains. They may enhance the attachment of the virions onto the host cell wall. The protein is Capsid fiber protein (8.5) of Bacillus subtilis (Bacteriophage PZA).